Here is a 274-residue protein sequence, read N- to C-terminus: 2,3,4,5-tetrahydropyridine-2,6-dicarboxylate N-succinyltransferase (274 aa).

Substrate contacts are provided by arginine 107 and aspartate 144.

This sequence belongs to the transferase hexapeptide repeat family. As to quaternary structure, homotrimer.

Its subcellular location is the cytoplasm. The enzyme catalyses (S)-2,3,4,5-tetrahydrodipicolinate + succinyl-CoA + H2O = (S)-2-succinylamino-6-oxoheptanedioate + CoA. It functions in the pathway amino-acid biosynthesis; L-lysine biosynthesis via DAP pathway; LL-2,6-diaminopimelate from (S)-tetrahydrodipicolinate (succinylase route): step 1/3. This chain is 2,3,4,5-tetrahydropyridine-2,6-dicarboxylate N-succinyltransferase, found in Cereibacter sphaeroides (strain ATCC 17025 / ATH 2.4.3) (Rhodobacter sphaeroides).